The chain runs to 376 residues: Chaperone protein DnaJ (376 aa).

The J domain occupies 5 to 70 (DYYEILGVSK…QKRAAYDQYG (66 aa)). The segment at 131-209 (GVTKEIRIPT…CHGHGRVERS (79 aa)) adopts a CR-type zinc-finger fold. Zn(2+)-binding residues include C144, C147, C161, C164, C183, C186, C197, and C200. CXXCXGXG motif repeat units follow at residues 144–151 (CDVCHGSG), 161–168 (CPTCHGSG), 183–190 (CPHCQGRG), and 197–204 (CNKCHGHG).

This sequence belongs to the DnaJ family. In terms of assembly, homodimer. It depends on Zn(2+) as a cofactor.

Its subcellular location is the cytoplasm. Functionally, participates actively in the response to hyperosmotic and heat shock by preventing the aggregation of stress-denatured proteins and by disaggregating proteins, also in an autonomous, DnaK-independent fashion. Unfolded proteins bind initially to DnaJ; upon interaction with the DnaJ-bound protein, DnaK hydrolyzes its bound ATP, resulting in the formation of a stable complex. GrpE releases ADP from DnaK; ATP binding to DnaK triggers the release of the substrate protein, thus completing the reaction cycle. Several rounds of ATP-dependent interactions between DnaJ, DnaK and GrpE are required for fully efficient folding. Also involved, together with DnaK and GrpE, in the DNA replication of plasmids through activation of initiation proteins. The protein is Chaperone protein DnaJ of Escherichia coli (strain K12 / MC4100 / BW2952).